Consider the following 858-residue polypeptide: Toll-like receptor 5 (858 aa).

An N-terminal signal peptide occupies residues 1–20 (MGDHLDLLLGVVLMAGPVFG). Over 21 to 639 (IPSCSFDGRI…DEEEVLKSLK (619 aa)) the chain is Extracellular. Residues asparagine 37 and asparagine 46 are each glycosylated (N-linked (GlcNAc...) asparagine). LRR repeat units lie at residues 45 to 68 (LNTT…SFPF), 71 to 93 (QLQL…AFRN), 95 to 117 (PNLR…AFQG), 120 to 143 (HLFE…YFRN), 146 to 166 (ALTR…HPSF), 171 to 192 (SLKS…ELEP), 197 to 211 (TLSF…LYSR), 214 to 229 (VDWG…MVLE), and 234 to 235 (SG). Asparagine 245 carries N-linked (GlcNAc...) asparagine glycosylation. LRR repeat units lie at residues 260–284 (LAHH…TFAG), 289–301 (SVRH…GFVF), 313–334 (DLKV…AFYG), 337–355 (NLQV…YSSN), 385–401 (KLQT…TIHF), 412–431 (GNKL…IHLS), 449–470 (HLQI…QTPS), 474–495 (SLEQ…ELCW), 503–524 (HLQV…VFSH), 527–546 (ALRG…HNDL), and 549–567 (NLEI…NPDV). An N-linked (GlcNAc...) asparagine glycan is attached at asparagine 342. Asparagine 422 carries N-linked (GlcNAc...) asparagine glycosylation. The LRRCT domain occupies 579-631 (NKFICECELSTFINWLNHTNVTIAGPPADIYCVYPDSFSGVSLFSLSTEGCDE). Cystine bridges form between cysteine 583/cysteine 610 and cysteine 585/cysteine 629. Asparagine 595 and asparagine 598 each carry an N-linked (GlcNAc...) asparagine glycan. Residues 640 to 660 (FSLFIVCTVTLTLFLMTILTV) traverse the membrane as a helical segment. Residues 661–858 (TKFRGFCFIC…IPLQTVATIS (198 aa)) lie on the Cytoplasmic side of the membrane. One can recognise a TIR domain in the interval 691–836 (YKYDAYLCFS…WFLHKLSQQI (146 aa)). Phosphotyrosine is present on tyrosine 798. Serine 805 carries the phosphoserine; by PKD/PRKD1 modification.

The protein belongs to the Toll-like receptor family. As to quaternary structure, homodimer. Interacts with MYD88 (via TIR domain). Interacts with TICAM1 (via TIR domain). Interacts with UNC93B1; this interaction is essential for proper TLR5 localization to the plasma membrane. Phosphorylated at Ser-805 by PKD/PRKD1; phosphorylation induces the production of inflammatory cytokines. In terms of processing, phosphorylated at Tyr-798 upon flagellin binding; required for signaling. Highly expressed on the basolateral surface of intestinal epithelia. Expressed also in other cells such as lung epithelial cells.

Its subcellular location is the cell membrane. Its function is as follows. Pattern recognition receptor (PRR) located on the cell surface that participates in the activation of innate immunity and inflammatory response. Recognizes small molecular motifs named pathogen-associated molecular pattern (PAMPs) expressed by pathogens and microbe-associated molecular patterns (MAMPs) usually expressed by resident microbiota. Upon ligand binding such as bacterial flagellins, recruits intracellular adapter proteins MYD88 and TRIF leading to NF-kappa-B activation, cytokine secretion and induction of the inflammatory response. Plays thereby an important role in the relationship between the intestinal epithelium and enteric microbes and contributes to the gut microbiota composition throughout life. The sequence is that of Toll-like receptor 5 (TLR5) from Homo sapiens (Human).